A 429-amino-acid polypeptide reads, in one-letter code: 26S proteasome regulatory subunit RPN7 (429 aa).

Phosphoserine occurs at positions 8 and 77. Residues 131–164 form a TPR repeat; it reads AQAWINLGEYYAQIGDKDNAEKTLGKSLSKAIST. The PCI domain occupies 223-395; that stretch reads NFKEAAKLLV…GIVETNRPDN (173 aa).

In terms of assembly, the 26S proteasome is composed of a core protease, known as the 20S proteasome, capped at one or both ends by the 19S regulatory complex (RC). The RC is composed of at least 18 different subunits in two subcomplexes, the base and the lid, which form the portions proximal and distal to the 20S proteolytic core, respectively. Component of the lid subcomplex of the 19S RC.

The protein resides in the nucleus. Component of the 19S cap proteasome complex which acts as a regulatory subunit of the 26S proteasome, involved in the ATP-dependent degradation of ubiquitinated proteins. This Saccharomyces cerevisiae (strain ATCC 204508 / S288c) (Baker's yeast) protein is 26S proteasome regulatory subunit RPN7.